The primary structure comprises 213 residues: 3,4-dihydroxy-2-butanone 4-phosphate synthase (213 aa).

Residues 37 to 38 (RE), D42, 150 to 154 (RAGHT), and E174 each bind D-ribulose 5-phosphate. Residue E38 coordinates Mg(2+). Position 153 (H153) interacts with Mg(2+).

The protein belongs to the DHBP synthase family. As to quaternary structure, homodimer. Mg(2+) is required as a cofactor. It depends on Mn(2+) as a cofactor.

It carries out the reaction D-ribulose 5-phosphate = (2S)-2-hydroxy-3-oxobutyl phosphate + formate + H(+). It participates in cofactor biosynthesis; riboflavin biosynthesis; 2-hydroxy-3-oxobutyl phosphate from D-ribulose 5-phosphate: step 1/1. Its function is as follows. Catalyzes the conversion of D-ribulose 5-phosphate to formate and 3,4-dihydroxy-2-butanone 4-phosphate. In Buchnera aphidicola subsp. Schizaphis graminum (strain Sg), this protein is 3,4-dihydroxy-2-butanone 4-phosphate synthase.